Here is a 190-residue protein sequence, read N- to C-terminus: MISKSRKTKETDITVSLDINGNGKSKIDTGVGFLDHMLDSFSKHSLIDLEITCKGDTHIDDHHSVEDIGIVLGALFAEALYPVSNMERFGSANIVMDEACVSCDLDLSNRPYLVYEVNLAGKVGQFDTELVEEFFRAFVLNARISTHIVLQRGKNRHHIIEAAFKAVAVALRRAMQKNERVGIPSTKDML.

This sequence belongs to the imidazoleglycerol-phosphate dehydratase family.

It is found in the cytoplasm. It catalyses the reaction D-erythro-1-(imidazol-4-yl)glycerol 3-phosphate = 3-(imidazol-4-yl)-2-oxopropyl phosphate + H2O. The protein operates within amino-acid biosynthesis; L-histidine biosynthesis; L-histidine from 5-phospho-alpha-D-ribose 1-diphosphate: step 6/9. The protein is Imidazoleglycerol-phosphate dehydratase of Sulfurimonas denitrificans (strain ATCC 33889 / DSM 1251) (Thiomicrospira denitrificans (strain ATCC 33889 / DSM 1251)).